The primary structure comprises 518 residues: ATP synthase F(1) complex catalytic subunit beta, mitochondrial (518 aa).

ADP-binding residues include Gly-199, Val-200, Gly-201, Lys-202, Thr-203, and Val-204. Gly-199 serves as a coordination point for ATP. Residues Gly-199, Val-200, Gly-201, Lys-202, and Thr-203 each coordinate phosphate. ATP is bound by residues Gly-201, Lys-202, Thr-203, and Val-204. Thr-203 lines the Mg(2+) pocket. Glu-228 serves as a coordination point for Mg(2+). Residue Arg-229 coordinates ATP.

It belongs to the ATPase alpha/beta chains family. Homotrimer. Component of the ATP synthase complex composed at least of ATP5F1A/subunit alpha, ATP5F1B/subunit beta, ATP5MC1/subunit c (homooctomer), MT-ATP6/subunit a, MT-ATP8/subunit 8, ATP5ME/subunit e, ATP5MF/subunit f, ATP5MG/subunit g, ATP5MK/subunit k, ATP5MJ/subunit j, ATP5F1C/subunit gamma, ATP5F1D/subunit delta, ATP5F1E/subunit epsilon, ATP5PF/subunit F6, ATP5PB/subunit b, ATP5PD/subunit d, ATP5PO/subunit OSCP. ATP synthase complex consists of a soluble F(1) head domain (subunits alpha(3) and beta(3)) - the catalytic core - and a membrane F(0) domain - the membrane proton channel (subunits c, a, 8, e, f, g, k and j). These two domains are linked by a central stalk (subunits gamma, delta, and epsilon) rotating inside the F1 region and a stationary peripheral stalk (subunits F6, b, d, and OSCP).

It is found in the mitochondrion inner membrane. The catalysed reaction is ATP + H2O + 4 H(+)(in) = ADP + phosphate + 5 H(+)(out). Catalytic subunit beta, of the mitochondrial membrane ATP synthase complex (F(1)F(0) ATP synthase or Complex V) that produces ATP from ADP in the presence of a proton gradient across the membrane which is generated by electron transport complexes of the respiratory chain. ATP synthase complex consist of a soluble F(1) head domain - the catalytic core - and a membrane F(1) domain - the membrane proton channel. These two domains are linked by a central stalk rotating inside the F(1) region and a stationary peripheral stalk. During catalysis, ATP synthesis in the catalytic domain of F(1) is coupled via a rotary mechanism of the central stalk subunits to proton translocation. In vivo, can only synthesize ATP although its ATP hydrolase activity can be activated artificially in vitro. With the subunit alpha (ATP5F1A), forms the catalytic core in the F(1) domain. The protein is ATP synthase F(1) complex catalytic subunit beta, mitochondrial of Cyprinus carpio (Common carp).